Reading from the N-terminus, the 356-residue chain is Nicotinate-nucleotide--dimethylbenzimidazole phosphoribosyltransferase (356 aa).

E317 (proton acceptor) is an active-site residue.

This sequence belongs to the CobT family. As to quaternary structure, homodimer.

It carries out the reaction 5,6-dimethylbenzimidazole + nicotinate beta-D-ribonucleotide = alpha-ribazole 5'-phosphate + nicotinate + H(+). It functions in the pathway nucleoside biosynthesis; alpha-ribazole biosynthesis; alpha-ribazole from 5,6-dimethylbenzimidazole: step 1/2. Functionally, catalyzes the synthesis of alpha-ribazole-5'-phosphate from nicotinate mononucleotide (NAMN) and 5,6-dimethylbenzimidazole (DMB). This is Nicotinate-nucleotide--dimethylbenzimidazole phosphoribosyltransferase from Salmonella schwarzengrund (strain CVM19633).